The following is a 162-amino-acid chain: Cyanate hydratase (162 aa).

Active-site residues include Arg103, Glu106, and Ser129.

This sequence belongs to the cyanase family.

It carries out the reaction cyanate + hydrogencarbonate + 3 H(+) = NH4(+) + 2 CO2. In terms of biological role, catalyzes the reaction of cyanate with bicarbonate to produce ammonia and carbon dioxide. The polypeptide is Cyanate hydratase (Phaeosphaeria nodorum (strain SN15 / ATCC MYA-4574 / FGSC 10173) (Glume blotch fungus)).